Here is a 212-residue protein sequence, read N- to C-terminus: NADH dehydrogenase [ubiquinone] iron-sulfur protein 8, mitochondrial (212 aa).

The N-terminal 34 residues, 1–34, are a transit peptide targeting the mitochondrion; it reads MYRLSSSMLPRALAQAMRTGHLNGQSLHSSAVAA. 4Fe-4S ferredoxin-type domains lie at 104 to 133 and 143 to 172; these read RRYP…IEAE and TRYD…EGPN. C113, C116, C119, C123, C152, C155, C158, and C162 together coordinate [4Fe-4S] cluster.

This sequence belongs to the complex I 23 kDa subunit family. In terms of assembly, complex I is composed of 45 different subunits. This is a component of the iron-sulfur (IP) fragment of the enzyme. Interacts with RAB5IF. The cofactor is [4Fe-4S] cluster.

The protein localises to the mitochondrion inner membrane. The catalysed reaction is a ubiquinone + NADH + 5 H(+)(in) = a ubiquinol + NAD(+) + 4 H(+)(out). Its function is as follows. Core subunit of the mitochondrial membrane respiratory chain NADH dehydrogenase (Complex I) which catalyzes electron transfer from NADH through the respiratory chain, using ubiquinone as an electron acceptor. Essential for the catalytic activity and assembly of complex I. This Mus musculus (Mouse) protein is NADH dehydrogenase [ubiquinone] iron-sulfur protein 8, mitochondrial (Ndufs8).